Reading from the N-terminus, the 50-residue chain is Small ribosomal subunit protein uS14 (50 aa).

4 residues coordinate Zn(2+): Cys-15, Cys-18, Cys-33, and Cys-36.

Belongs to the universal ribosomal protein uS14 family. Zinc-binding uS14 subfamily. In terms of assembly, part of the 30S ribosomal subunit. It depends on Zn(2+) as a cofactor.

Its function is as follows. Binds 16S rRNA, required for the assembly of 30S particles. This is Small ribosomal subunit protein uS14 from Methanococcoides burtonii (strain DSM 6242 / NBRC 107633 / OCM 468 / ACE-M).